We begin with the raw amino-acid sequence, 242 residues long: Universal stress protein PHOS32 (242 aa).

A chloroplast-targeting transit peptide spans 1 to 43 (MNPADSDHPQLPNIKIHHPPSPRHSHHHHSSSTPSSAATPTPT). Residues 1–45 (MNPADSDHPQLPNIKIHHPPSPRHSHHHHSSSTPSSAATPTPTAG) are disordered. Positions 15–30 (KIHHPPSPRHSHHHHS) are enriched in basic residues. Proline 19 is a binding site for ATP. Position 21 is a phosphoserine; by MAPK3 and MAPK6 (serine 21). The segment covering 31 to 44 (SSTPSSAATPTPTA) has biased composition (low complexity). ATP is bound by residues valine 83, 168-178 (GSRGFGAEKKR), and 186-188 (SVS). Position 219 is a phosphoserine (serine 219).

The protein belongs to the universal stress protein A family. Post-translationally, phosphorylated by MAPK3 and MAPK6 after pathogenic elicitation (e.g. bacterial flg22, Phytophthora infestans zoospores and xylanase).

The protein localises to the plastid. The protein resides in the chloroplast. The protein is Universal stress protein PHOS32 of Arabidopsis thaliana (Mouse-ear cress).